We begin with the raw amino-acid sequence, 512 residues long: Kynurenine 3-monooxygenase (512 aa).

It belongs to the aromatic-ring hydroxylase family. KMO subfamily. FAD is required as a cofactor.

The protein resides in the mitochondrion outer membrane. The catalysed reaction is L-kynurenine + NADPH + O2 + H(+) = 3-hydroxy-L-kynurenine + NADP(+) + H2O. It participates in cofactor biosynthesis; NAD(+) biosynthesis; quinolinate from L-kynurenine: step 1/3. Catalyzes the hydroxylation of L-kynurenine (L-Kyn) to form 3-hydroxy-L-kynurenine (L-3OHKyn). Required for synthesis of quinolinic acid. In Neurospora crassa (strain ATCC 24698 / 74-OR23-1A / CBS 708.71 / DSM 1257 / FGSC 987), this protein is Kynurenine 3-monooxygenase (nic-3).